Here is an 83-residue protein sequence, read N- to C-terminus: MSSGSLLLLLGLLTLLAELTPVSSRKRHPDCDKPPNKKRCTGHIPAFYYNPQRKTCERFSYGGCKGNGNHFKTPQLCMCHCHE.

Residues 1–24 (MSSGSLLLLLGLLTLLAELTPVSS) form the signal peptide. The 51-residue stretch at 31–81 (CDKPPNKKRCTGHIPAFYYNPQRKTCERFSYGGCKGNGNHFKTPQLCMCHC) folds into the BPTI/Kunitz inhibitor domain. Cystine bridges form between Cys31–Cys81, Cys40–Cys64, and Cys56–Cys77.

Belongs to the venom Kunitz-type family. In terms of assembly, heterodimer with beta-bungarotoxin A1 chain; disulfide-linked. The A chain has phospholipase A2 activity and the B chain shows homology with the basic protease inhibitors. Expressed by the venom gland.

The protein localises to the secreted. Functionally, beta-bungarotoxin is a presynaptic neurotoxin of the venom. The B chain is homologous to venom basic protease inhibitors but has no protease inhibitor activity and is non-toxic. The polypeptide is Kunitz-type serine protease inhibitor homolog beta-bungarotoxin B chain (Bungarus flaviceps flaviceps (Red-headed krait)).